A 530-amino-acid chain; its full sequence is Cation transporter HKT2;2 (530 aa).

Residues 1–40 (MTSIYQEFIHTKCQSFRSIGRYVLHSIVLIYRFVSLHVHP) are Cytoplasmic-facing. Helical transmembrane passes span 41-61 (FWIQ…LLMF) and 102-122 (IVVL…FLGL). Residues 123–186 (MLRLKHKHNP…DLKRSKRLRW (64 aa)) are Cytoplasmic-facing. 2 helical membrane passes run 187–207 (FLGF…FLLV) and 260–280 (GLLL…PLFL). Residues 281–317 (RILIWFLGKVTKLKDLKLMIKNSDELQYDYLLPKLPT) lie on the Cytoplasmic side of the membrane. The next 2 membrane-spanning stretches (helical) occupy residues 318 to 338 (AFLA…FGSV) and 372 to 392 (IDCS…MYLP). At 393–420 (PSTTFALSNGDEKTANKKAKRKLGLVVR) the chain is on the cytoplasmic side. 2 consecutive transmembrane segments (helical) span residues 421–441 (NLAF…LITE) and 494–514 (SLSG…MLYG). Topologically, residues 515–530 (RLKAFTKGTGEYWRLW) are cytoplasmic.

This sequence belongs to the TrkH potassium transport family. HKT (TC 2.A.38.3) subfamily.

The protein localises to the membrane. In terms of biological role, seems to be involved in regulation of potassium-sodium homeostasis. Seems to act as a potassium-sodium cotransporter, which mediates increased potassium uptake under external sodium accumulation and contributes to salt-tolerance in cultivar indica Pokkali. The sequence is that of Cation transporter HKT2;2 from Oryza sativa subsp. indica (Rice).